The chain runs to 201 residues: MARDYDHLFKLLIIGDSGVGKSSLLLRFADNTFSGSYITTIGVDFKIRTVEINGEKVKLQIWDTAGQERFRTITSTYYRGTHGVIVVYDVTSAESFVNVKRWLHEINQNCDDVCRILVGNKNDDPERKVVETEDAYKFAGQMGIQLFETSAKENVNVEEMFNCITELVLRAKKDNLAKQQQQQQNDVVKLTKNSKRKKRCC.

Residues Gly-18, Val-19, Gly-20, Lys-21, Ser-22, Ser-23, Ser-34, Gly-35, Tyr-37, Thr-39, and Thr-40 each contribute to the GTP site. Ser-22 provides a ligand contact to Mg(2+). Positions 30-42 match the Switch 1 motif; it reads DNTFSGSYITTIG. Residues Thr-40 and Asp-63 each coordinate Mg(2+). The Switch 2 motif lies at 64 to 80; sequence TAGQERFRTITSTYYRG. Gly-66 provides a ligand contact to GTP. At Thr-72 the chain carries Phosphothreonine; by LRRK2. Ser-75 carries the post-translational modification O-(2-cholinephosphoryl)serine. Residue Tyr-77 is modified to O-AMP-tyrosine. GTP is bound by residues Asn-120, Lys-121, Asp-123, Ala-151, and Lys-152. S-geranylgeranyl cysteine attachment occurs at residues Cys-200 and Cys-201.

This sequence belongs to the small GTPase superfamily. Rab family. As to quaternary structure, interacts with DENND1A and DENND1B; in a nucleotide-dependent manner. Interacts with DENND1C; weak interaction which is nucleotide-independent. Interacts (GTP-bound form) with ACAP2, RUSC2, OCRL MICAL1 and MICALL1; the interaction is direct and probably recruits these effectors to membranes. Interacts with EHD1; the interaction is indirect through MICALL1 and probably recruits EHD1 to membranes. Interacts with GDI1, GDI2, CHM and CHML; phosphorylation at Thr-72 by LRRK2 disrupts these interactions. Mg(2+) serves as cofactor. Phosphorylation at Thr-72 by LRRK2 prevents the association of regulatory proteins including CHM, CHML and GDP dissociation inhibitors GDI1 and GDI2. In terms of processing, AMPylation at Tyr-77 by L.pneumophila DrrA occurs in the switch 2 region and leads to moderate inactivation of the GTPase activity. It appears to prolong the lifetime of the GTP state of RAB1B by restricting access of GTPase effectors to switch 2 and blocking effector-stimulated GTP hydrolysis, thereby rendering RAB35 constitutively active. Post-translationally, phosphocholinated by L.pneumophila AnkX. Both GDP-bound and GTP-bound forms can be phosphocholinated. Phosphocholination inhibits the GEF activity of DENND1A.

The protein localises to the cell membrane. It localises to the membrane. The protein resides in the clathrin-coated pit. It is found in the cytoplasmic vesicle. Its subcellular location is the clathrin-coated vesicle. The protein localises to the endosome. It localises to the melanosome. The catalysed reaction is GTP + H2O = GDP + phosphate + H(+). Regulated by guanine nucleotide exchange factors (GEFs) including DENND1A, DENND1B and DENND1C which promote the exchange of bound GDP for free GTP. Regulated by GTPase activating proteins (GAPs) including TBC1D10 and TBC1D13 which increase GTP hydrolysis activity. Inhibited by GDP dissociation inhibitors (GDIs) which prevent Rab-GDP dissociation. Functionally, the small GTPases Rab are key regulators of intracellular membrane trafficking, from the formation of transport vesicles to their fusion with membranes. Rabs cycle between an inactive GDP-bound form and an active GTP-bound form that is able to recruit to membranes different sets of downstream effectors directly responsible for vesicle formation, movement, tethering and fusion. RAB35 is involved in the process of endocytosis and is an essential rate-limiting regulator of the fast recycling pathway back to the plasma membrane. During cytokinesis, required for the postfurrowing terminal steps, namely for intercellular bridge stability and abscission, possibly by controlling phosphatidylinositol 4,5-bis phosphate (PIP2) and SEPT2 localization at the intercellular bridge. May indirectly regulate neurite outgrowth. Together with TBC1D13 may be involved in regulation of insulin-induced glucose transporter SLC2A4/GLUT4 translocation to the plasma membrane in adipocytes. This chain is Ras-related protein Rab-35, found in Homo sapiens (Human).